We begin with the raw amino-acid sequence, 145 residues long: 3-hydroxyacyl-[acyl-carrier-protein] dehydratase FabZ (145 aa).

The active site involves His-48.

The protein belongs to the thioester dehydratase family. FabZ subfamily.

The protein resides in the cytoplasm. It catalyses the reaction a (3R)-hydroxyacyl-[ACP] = a (2E)-enoyl-[ACP] + H2O. Involved in unsaturated fatty acids biosynthesis. Catalyzes the dehydration of short chain beta-hydroxyacyl-ACPs and long chain saturated and unsaturated beta-hydroxyacyl-ACPs. This chain is 3-hydroxyacyl-[acyl-carrier-protein] dehydratase FabZ, found in Saccharophagus degradans (strain 2-40 / ATCC 43961 / DSM 17024).